The sequence spans 294 residues: uncharacterized protein (294 aa).

This is an uncharacterized protein from Mycoplasma pneumoniae (strain ATCC 29342 / M129 / Subtype 1) (Mycoplasmoides pneumoniae).